A 269-amino-acid polypeptide reads, in one-letter code: Probable ribosomal RNA small subunit methyltransferase A (269 aa).

S-adenosyl-L-methionine contacts are provided by histidine 19, leucine 21, glycine 46, glutamate 67, aspartate 92, and asparagine 107.

This sequence belongs to the class I-like SAM-binding methyltransferase superfamily. rRNA adenine N(6)-methyltransferase family. RsmA subfamily.

The protein localises to the cytoplasm. Specifically dimethylates two adjacent adenosines in the loop of a conserved hairpin near the 3'-end of 16S rRNA in the 30S particle. May play a critical role in biogenesis of 30S subunits. This Methanosarcina acetivorans (strain ATCC 35395 / DSM 2834 / JCM 12185 / C2A) protein is Probable ribosomal RNA small subunit methyltransferase A.